Consider the following 258-residue polypeptide: 5'-nucleotidase SurE (258 aa).

A divalent metal cation is bound by residues aspartate 8, aspartate 9, serine 40, and asparagine 93.

It belongs to the SurE nucleotidase family. A divalent metal cation serves as cofactor.

It localises to the cytoplasm. It carries out the reaction a ribonucleoside 5'-phosphate + H2O = a ribonucleoside + phosphate. Its function is as follows. Nucleotidase that shows phosphatase activity on nucleoside 5'-monophosphates. This chain is 5'-nucleotidase SurE, found in Afipia carboxidovorans (strain ATCC 49405 / DSM 1227 / KCTC 32145 / OM5) (Oligotropha carboxidovorans).